The following is a 228-amino-acid chain: Protein-L-isoaspartate O-methyltransferase (228 aa).

The segment at 1–20 is disordered; the sequence is MVAVSLKMSQPAAPPPPMGE. Ser76 is an active-site residue.

Belongs to the methyltransferase superfamily. L-isoaspartyl/D-aspartyl protein methyltransferase family.

Its subcellular location is the cytoplasm. It catalyses the reaction [protein]-L-isoaspartate + S-adenosyl-L-methionine = [protein]-L-isoaspartate alpha-methyl ester + S-adenosyl-L-homocysteine. Functionally, catalyzes the methyl esterification of L-isoaspartyl residues in peptides and proteins that result from spontaneous decomposition of normal L-aspartyl and L-asparaginyl residues. It plays a role in the repair and/or degradation of damaged proteins. The polypeptide is Protein-L-isoaspartate O-methyltransferase (Magnetococcus marinus (strain ATCC BAA-1437 / JCM 17883 / MC-1)).